Consider the following 176-residue polypeptide: Protein CURLY FLAG LEAF 2 (176 aa).

Residues 41 to 46 carry the EAR motif; that stretch reads FLELSS. Positions 48 to 82 constitute a WW domain; that stretch reads FSVPSHLEQCLDLKTGEIYYRSWNSGMRVKEDPRK. Disordered regions lie at residues 77-106 and 111-130; these read KEDPRKSMSRGNYADQSSGESSGTVFSSEE and YESEESSSESSPSSRKYHKE. Over residues 93–106 the composition is skewed to low complexity; sequence SSGESSGTVFSSEE.

In terms of assembly, may interact with BHLH122/CFLAP1 and BHLH80/CFLAP2.

May negatively regulate the cuticle development by interacting with the HD-ZIP IV transcription factor HDG1. This is Protein CURLY FLAG LEAF 2 from Arabidopsis thaliana (Mouse-ear cress).